The following is a 484-amino-acid chain: Vanillin dehydrogenase (484 aa).

NADP(+)-binding positions include 156–157 (WN), 180–183 (KPAS), and 234–235 (GS). Residues K180 and 234–239 (GSTPVG) contribute to the NAD(+) site. Residue E258 is the Proton acceptor of the active site. Position 259 (L259) interacts with NADP(+). Residue C292 is the Nucleophile of the active site. Residues Q339 and E386 each contribute to the NAD(+) site. NADP(+) is bound at residue E386.

The protein belongs to the aldehyde dehydrogenase family. As to quaternary structure, exists as a homodimer, homotrimer and homotetramer.

It carries out the reaction vanillin + NAD(+) + H2O = vanillate + NADH + 2 H(+). The enzyme catalyses vanillin + NADP(+) + H2O = vanillate + NADPH + 2 H(+). The catalysed reaction is 3,4-dihydroxybenzaldehyde + NAD(+) + H2O = 3,4-dihydroxybenzoate + NADH + 2 H(+). It catalyses the reaction 3,4-dihydroxybenzaldehyde + NADP(+) + H2O = 3,4-dihydroxybenzoate + NADPH + 2 H(+). It carries out the reaction 4-hydroxybenzaldehyde + NAD(+) + H2O = 4-hydroxybenzoate + NADH + 2 H(+). The enzyme catalyses 4-hydroxybenzaldehyde + NADP(+) + H2O = 4-hydroxybenzoate + NADPH + 2 H(+). In terms of biological role, catalyzes oxidation of vanillin to vanillate. Also oxidizes 3,4-dihydroxybenzaldehyde and 4-hydroxybenzaldehyde significantly. Other aromatic aldehyde substrates in the order of decreasing activity include 3-hydroxybenzaldehyde, 4-nitrobenzaldehyde, terephthalaldehyde, 2,4-dichlorobenzaldehyde, benzaldehyde and 3-phenylpropanal. Low activity with phthalaldehyde, cinnamaldehyde and syringaldehyde. No activity with phenylacetaldehyde, formaldehyde or aldehyde. Active with both NAD(+) and NADP(+). Involved in the degradation pathway of lignin-derived aromatic compounds of plant cell walls. Catalyzes the conversion of vanillin to vanillate due to toxicity of vanillin to the cells. This chain is Vanillin dehydrogenase, found in Corynebacterium glutamicum (strain ATCC 13032 / DSM 20300 / JCM 1318 / BCRC 11384 / CCUG 27702 / LMG 3730 / NBRC 12168 / NCIMB 10025 / NRRL B-2784 / 534).